The following is a 113-amino-acid chain: UPF0122 protein Sez_1013 (113 aa).

The protein belongs to the UPF0122 family.

Its function is as follows. Might take part in the signal recognition particle (SRP) pathway. This is inferred from the conservation of its genetic proximity to ftsY/ffh. May be a regulatory protein. The protein is UPF0122 protein Sez_1013 of Streptococcus equi subsp. zooepidemicus (strain MGCS10565).